We begin with the raw amino-acid sequence, 508 residues long: Photosystem II CP47 reaction center protein (508 aa).

A run of 6 helical transmembrane segments spans residues 21–36, 101–115, 140–156, 203–218, 237–252, and 457–472; these read SVHIMHTALVAGWAGS, IVFSGLCFLAAIWHW, GIHLFLAGVACFGFGAF, IAAGTLGILAGLFHLS, VLSSSIAAVFFAAFVV, and SFALLFFFGHIWHGAR.

Belongs to the PsbB/PsbC family. PsbB subfamily. As to quaternary structure, PSII is composed of 1 copy each of membrane proteins PsbA, PsbB, PsbC, PsbD, PsbE, PsbF, PsbH, PsbI, PsbJ, PsbK, PsbL, PsbM, PsbT, PsbX, PsbY, PsbZ, Psb30/Ycf12, at least 3 peripheral proteins of the oxygen-evolving complex and a large number of cofactors. It forms dimeric complexes. Binds multiple chlorophylls. PSII binds additional chlorophylls, carotenoids and specific lipids. serves as cofactor.

It localises to the plastid. The protein localises to the chloroplast thylakoid membrane. In terms of biological role, one of the components of the core complex of photosystem II (PSII). It binds chlorophyll and helps catalyze the primary light-induced photochemical processes of PSII. PSII is a light-driven water:plastoquinone oxidoreductase, using light energy to abstract electrons from H(2)O, generating O(2) and a proton gradient subsequently used for ATP formation. The chain is Photosystem II CP47 reaction center protein from Phaseolus vulgaris (Kidney bean).